A 222-amino-acid chain; its full sequence is Pre-mRNA cleavage factor Im 25 kDa subunit 1 (222 aa).

The 128-residue stretch at 67-194 folds into the Nudix hydrolase domain; the sequence is GLRTCVEAVL…KLLAVPLCQL (128 aa). Positions 94-96 are interaction with RNA; the sequence is SIF. The Nudix box signature appears at 101–122; the sequence is GRLRPGESDIEGLKRKLASKLS.

Belongs to the Nudix hydrolase family. CPSF5 subfamily. As to quaternary structure, homodimer. Component of the cleavage factor Im (CFIm) complex. Forms a complex with cleavage and polyadenylation specificity factor (CPSF) subunits FIPS5.

It localises to the nucleus. Its function is as follows. Component of the cleavage factor Im (CFIm) complex that plays a key role in pre-mRNA 3'-processing. Involved in association with CPSF6 or CPSF7 in pre-MRNA 3'-end poly(A) site cleavage and poly(A) addition. NUDT21/CPSF5 binds to cleavage and polyadenylation RNA substrates. The homodimer mediates simultaneous sequence-specific recognition of two 5'-UGUA-3' elements within the pre-mRNA. Binds to, but does not hydrolyze mono- and di-adenosine nucleotides. May have a role in mRNA export. The chain is Pre-mRNA cleavage factor Im 25 kDa subunit 1 from Arabidopsis thaliana (Mouse-ear cress).